The following is a 165-amino-acid chain: MDEVPSSDGSKSACSGEVVMEQSVHELEEVFKKFDANGDGKISGSELADILRSLGSDVGEAEVKAMMEEADADGDGYVSLQEFVDLNNKGASVKDLKNAFKVFDRDCNGSISAAELCHTLESVGEPCTIEESKNIIHNVDKNGDGLISVEEFQTMMTSEMTDKSK.

4 consecutive EF-hand domains span residues 22-57 (QSVH…LGSD), 58-86 (VGEA…FVDL), 91-126 (ASVK…VGEP), and 127-162 (CTIE…EMTD). Asp-35, Asn-37, Asp-39, Lys-41, Glu-46, Asp-71, Asp-73, Asp-75, Tyr-77, Glu-82, Asp-104, Asp-106, Asn-108, Ser-110, Glu-115, Asp-140, Asn-142, Asp-144, and Glu-151 together coordinate Ca(2+).

This is Polcalcin Jun o 2 from Juniperus oxycedrus (Prickly juniper).